Reading from the N-terminus, the 182-residue chain is MLEETEAALLARVRELFGATLRQVEPLTGTWTNEDVHRLFLAPPSVFLAWMGCGEGRTRREVESRWAFFVVAELLNGEPVNRPGIYQIVERLIAGVNGQTFGPTTGMRLTQVRNLCDDNRINAGVVLYGVLFSGTTPLPSVVDLDSLDDYERHWQTWKFPDETPEFAAHINVNQEKDHDAEN.

The protein resides in the virion. The protein localises to the host cytoplasm. In terms of biological role, may stop tail tube polymerization by capping the rapidly polymerizing tail tube once it has reached its requisite length and prevent its depolymerization. The sequence is that of Probable tail terminator protein from Enterobacteriaceae (Bacteriophage Mu).